A 200-amino-acid chain; its full sequence is Probable nicotinate-nucleotide adenylyltransferase (200 aa).

It belongs to the NadD family.

The catalysed reaction is nicotinate beta-D-ribonucleotide + ATP + H(+) = deamido-NAD(+) + diphosphate. It functions in the pathway cofactor biosynthesis; NAD(+) biosynthesis; deamido-NAD(+) from nicotinate D-ribonucleotide: step 1/1. Functionally, catalyzes the reversible adenylation of nicotinate mononucleotide (NaMN) to nicotinic acid adenine dinucleotide (NaAD). This chain is Probable nicotinate-nucleotide adenylyltransferase, found in Clavibacter michiganensis subsp. michiganensis (strain NCPPB 382).